A 569-amino-acid polypeptide reads, in one-letter code: Urease subunit alpha (569 aa).

The Urease domain occupies 131–569 (GGIDTHIHFI…LPLAQRYLLL (439 aa)). Positions 136, 138, and 219 each coordinate Ni(2+). Lys-219 bears the N6-carboxylysine mark. A substrate-binding site is contributed by His-221. 2 residues coordinate Ni(2+): His-248 and His-274. His-322 acts as the Proton donor in catalysis. Residue Asp-362 participates in Ni(2+) binding.

Belongs to the metallo-dependent hydrolases superfamily. Urease alpha subunit family. In terms of assembly, heterotrimer of UreA (gamma), UreB (beta) and UreC (alpha) subunits. Three heterotrimers associate to form the active enzyme. Ni cation is required as a cofactor. Post-translationally, carboxylation allows a single lysine to coordinate two nickel ions.

The protein localises to the cytoplasm. The enzyme catalyses urea + 2 H2O + H(+) = hydrogencarbonate + 2 NH4(+). The protein operates within nitrogen metabolism; urea degradation; CO(2) and NH(3) from urea (urease route): step 1/1. In Synechococcus sp. (strain CC9605), this protein is Urease subunit alpha.